A 203-amino-acid chain; its full sequence is Ran-specific GTPase-activating protein (203 aa).

Positions M1–Q26 are enriched in basic and acidic residues. The disordered stretch occupies residues M1–L33. Residue A2 is modified to N-acetylalanine. T13 bears the Phosphothreonine mark. Residues S21 and S60 each carry the phosphoserine modification. The region spanning Q26 to E164 is the RanBD1 domain. The residue at position 150 (K150) is an N6-acetyllysine; alternate. K150 bears the N6-succinyllysine; alternate mark. Over residues E163–R192 the composition is skewed to basic and acidic residues. Residues E163–Q203 form a disordered region. K182 is subject to N6-acetyllysine. At S187 the chain carries Phosphoserine. A compositionally biased stretch (acidic residues) spans E193–Q203.

Belongs to the RANBP1 family. In terms of assembly, interacts with RAN (via C-terminus of GTP-bound form) but not with GDP-bound RAN. Identified in a complex composed of RAN, RANGAP1 and RANBP1. Identified in a complex that contains TNPO1, RAN and RANBP1. Identified in a complex that contains CSE1L, KPNA2, RAN and RANBP1. Identified in a complex with nucleotide-free RAN and RCC1.

Its function is as follows. Plays a role in RAN-dependent nucleocytoplasmic transport. Alleviates the TNPO1-dependent inhibition of RAN GTPase activity and mediates the dissociation of RAN from proteins involved in transport into the nucleus. Induces a conformation change in the complex formed by XPO1 and RAN that triggers the release of the nuclear export signal of cargo proteins. Promotes the disassembly of the complex formed by RAN and importin beta. Promotes dissociation of RAN from a complex with KPNA2 and CSE1L. Required for normal mitotic spindle assembly and normal progress through mitosis via its effect on RAN. Does not increase the RAN GTPase activity by itself, but increases GTP hydrolysis mediated by RANGAP1. Inhibits RCC1-dependent exchange of RAN-bound GDP by GTP. The protein is Ran-specific GTPase-activating protein (Ranbp1) of Mus musculus (Mouse).